Here is a 160-residue protein sequence, read N- to C-terminus: Cytochrome b6-f complex subunit 4 (160 aa).

3 consecutive transmembrane segments (helical) span residues 36–56, 95–115, and 131–151; these read LLYM…GLSV, LLGV…PFIE, and ILFL…TFPI.

Belongs to the cytochrome b family. PetD subfamily. As to quaternary structure, the 4 large subunits of the cytochrome b6-f complex are cytochrome b6, subunit IV (17 kDa polypeptide, petD), cytochrome f and the Rieske protein, while the 4 small subunits are petG, petL, petM and petN. The complex functions as a dimer. Post-translationally, the N-terminus is blocked.

The protein resides in the plastid. Its subcellular location is the chloroplast thylakoid membrane. In terms of biological role, component of the cytochrome b6-f complex, which mediates electron transfer between photosystem II (PSII) and photosystem I (PSI), cyclic electron flow around PSI, and state transitions. This chain is Cytochrome b6-f complex subunit 4, found in Chlamydomonas reinhardtii (Chlamydomonas smithii).